Consider the following 491-residue polypeptide: G2/mitotic-specific cyclin-A (491 aa).

Positions 1-21 are disordered; sequence MASFQIHQDMSNKENPGIKIP. The region spanning 206–332 is the Cyclin N-terminal domain; sequence DILEYFRESE…ILKILSFDLC (127 aa).

This sequence belongs to the cyclin family. Cyclin AB subfamily. As to quaternary structure, component of the Frs-CycA-Cdk1 complex composed of CycA, Cdk1 and Z600. Interacts (via C-terminus) with Z600. Interacts with otu and (via C-terminus) with bam; the interaction stabilizes CycA by negatively regulating its ubiquitination. Post-translationally, ubiquitinated. Ubiquitination state is negatively regulated by a deubiquitinase complex made up of bam and otu.

In terms of biological role, essential for the control of the cell cycle at the G2/M (mitosis) transition. Interacts with the Cdk1 and Cdk2 protein kinases to form MPF. G2/M cyclins accumulate steadily during G2 and are abruptly destroyed at mitosis. This Drosophila melanogaster (Fruit fly) protein is G2/mitotic-specific cyclin-A (CycA).